Here is a 570-residue protein sequence, read N- to C-terminus: MRYTNYFIPTLKETPSDAEVVSHQLMLRAGMIRKLAAGIYNYLPLGLRSIRKVETIVREEMDRAGAIELLMPSVQPAELWQESTRWEQYGKELLRFKDRKDAEFCLGPTHEEVVTDIVRREVKSYRQMPFNLYQIQAKFRDEIRPRFGLMRGREFIMKDAYSFDVDSSASDLSYDKMYQAYRRIFQRCGLKFRAVEADTGSIGGSSSHEFMVLADSGEDAIVSCTQCEYAANVEKAEARPAPAEHAEPRPLEKVETPAKRSVEEVTAFLGIPSSALVKTLLVVADGTPVAALVRGDHDLNEIKLKHLLGCETLEMANEEMVTRVTGAPVGFAGPVGLNIKIVADLAVQGMKNFVTGANAGDLHLKNVTIGRDFTPTQYADIRNVVHGDPCPRCEAGHLELWRGIEVGHVFKLGTKYSEALRATYLDADGKEQIIFMGCYGIGISRTVAACIEQNHDADGIIFPIPIAPFHCIVSAVNTKDAEVMAACESLYLDLRAAGVEVLFDDRDERPGIKFKDADLIGIPLRLVVGSKNLADGKVELKSRRTGEVELLPLAGAVEKVRNIVAEALGR.

Positions alanine 238 to proline 257 are disordered.

This sequence belongs to the class-II aminoacyl-tRNA synthetase family. ProS type 1 subfamily. In terms of assembly, homodimer.

Its subcellular location is the cytoplasm. The catalysed reaction is tRNA(Pro) + L-proline + ATP = L-prolyl-tRNA(Pro) + AMP + diphosphate. Functionally, catalyzes the attachment of proline to tRNA(Pro) in a two-step reaction: proline is first activated by ATP to form Pro-AMP and then transferred to the acceptor end of tRNA(Pro). As ProRS can inadvertently accommodate and process non-cognate amino acids such as alanine and cysteine, to avoid such errors it has two additional distinct editing activities against alanine. One activity is designated as 'pretransfer' editing and involves the tRNA(Pro)-independent hydrolysis of activated Ala-AMP. The other activity is designated 'posttransfer' editing and involves deacylation of mischarged Ala-tRNA(Pro). The misacylated Cys-tRNA(Pro) is not edited by ProRS. In Geobacter sulfurreducens (strain ATCC 51573 / DSM 12127 / PCA), this protein is Proline--tRNA ligase.